The primary structure comprises 263 residues: MRNLPIGVFDSGVGGLTVARAILDLLPHEPLYYVADTAHFPYGTKSIAEVRQYGLAVLDRMVADGVKLLVIACNSASSALLRDARERYDVPVVEVIQPAVRKAVSATRNGKVGVIGTPATIASMAYDDAFAAAPHVDLTTAACPRFVEFVEAGITMSDELLECAKEYLAPIVERGCDTLILGCTHYPFLAGAIALVVGDEVMLVSSADETARDVYRVLVSRGLTRPASAPPPVHRFAATGDPEPFSRLGRRFLGPEIGHVTTL.

Substrate is bound by residues 10–11 (DS) and 42–43 (YG). C73 functions as the Proton donor/acceptor in the catalytic mechanism. 74–75 (NS) contacts substrate. Catalysis depends on C183, which acts as the Proton donor/acceptor. Substrate is bound at residue 184-185 (TH).

It belongs to the aspartate/glutamate racemases family.

It carries out the reaction L-glutamate = D-glutamate. It participates in cell wall biogenesis; peptidoglycan biosynthesis. In terms of biological role, provides the (R)-glutamate required for cell wall biosynthesis. The sequence is that of Glutamate racemase from Acidothermus cellulolyticus (strain ATCC 43068 / DSM 8971 / 11B).